The sequence spans 578 residues: Isocitrate dehydrogenase kinase/phosphatase (578 aa).

ATP contacts are provided by residues 315 to 321 (APGIRGM) and Lys-336. The active site involves Asp-371.

This sequence belongs to the AceK family.

The protein resides in the cytoplasm. It catalyses the reaction L-seryl-[isocitrate dehydrogenase] + ATP = O-phospho-L-seryl-[isocitrate dehydrogenase] + ADP + H(+). Functionally, bifunctional enzyme which can phosphorylate or dephosphorylate isocitrate dehydrogenase (IDH) on a specific serine residue. This is a regulatory mechanism which enables bacteria to bypass the Krebs cycle via the glyoxylate shunt in response to the source of carbon. When bacteria are grown on glucose, IDH is fully active and unphosphorylated, but when grown on acetate or ethanol, the activity of IDH declines drastically concomitant with its phosphorylation. This chain is Isocitrate dehydrogenase kinase/phosphatase, found in Escherichia coli O157:H7.